The primary structure comprises 313 residues: Ribosomal protein uL3 glutamine methyltransferase (313 aa).

The protein belongs to the protein N5-glutamine methyltransferase family. PrmB subfamily.

It carries out the reaction L-glutaminyl-[ribosomal protein uL3] + S-adenosyl-L-methionine = N(5)-methyl-L-glutaminyl-[ribosomal protein uL3] + S-adenosyl-L-homocysteine + H(+). Its function is as follows. Methylates large ribosomal subunit protein uL3 on a specific glutamine residue. The sequence is that of Ribosomal protein uL3 glutamine methyltransferase from Pasteurella multocida (strain Pm70).